A 727-amino-acid chain; its full sequence is Cadmium-transporting ATPase (727 aa).

In terms of domain architecture, HMA spans 12 to 75 (EMNVYRVQGF…AGAFENLKVS (64 aa)). The Cd(2+) site is built by Cys-23 and Cys-26. The next 5 helical transmembrane spans lie at 106–126 (STLL…FVNG), 130–150 (LVTS…LFKV), 171–191 (IGAT…LFAI), 336–356 (IIMV…GGSW), and 364–384 (LAVL…ISIV). The active-site 4-aspartylphosphate intermediate is Asp-415. The next 2 membrane-spanning stretches (helical) occupy residues 672-694 (LNII…LLVI) and 699-721 (TLWI…SLRL).

Belongs to the cation transport ATPase (P-type) (TC 3.A.3) family. Type IB subfamily.

It localises to the cell membrane. The enzyme catalyses Cd(2+)(in) + ATP + H2O = Cd(2+)(out) + ADP + phosphate + H(+). With respect to regulation, inhibited by the antibiotic bafilomycin A1. Partially inhibited by DCCD, nigericin and FCCP. Functionally, couples the hydrolysis of ATP with the export of cadmium. Involved in cadmium resistance. The polypeptide is Cadmium-transporting ATPase (Staphylococcus aureus).